A 270-amino-acid polypeptide reads, in one-letter code: Phosphatidylglycerol--prolipoprotein diacylglyceryl transferase (270 aa).

4 helical membrane passes run 19 to 39 (FPVY…LWLA), 56 to 76 (LVLI…VIFE), 92 to 112 (QGGL…ILFA), and 116 to 136 (GVSF…GQAI). An a 1,2-diacyl-sn-glycero-3-phospho-(1'-sn-glycerol)-binding site is contributed by Arg-138. 3 consecutive transmembrane segments (helical) span residues 178–198 (HPTF…LLAL), 206–226 (GELF…VEGL), and 236–256 (LRIA…FIIV).

It belongs to the Lgt family.

It is found in the cell membrane. It catalyses the reaction L-cysteinyl-[prolipoprotein] + a 1,2-diacyl-sn-glycero-3-phospho-(1'-sn-glycerol) = an S-1,2-diacyl-sn-glyceryl-L-cysteinyl-[prolipoprotein] + sn-glycerol 1-phosphate + H(+). The protein operates within protein modification; lipoprotein biosynthesis (diacylglyceryl transfer). Catalyzes the transfer of the diacylglyceryl group from phosphatidylglycerol to the sulfhydryl group of the N-terminal cysteine of a prolipoprotein, the first step in the formation of mature lipoproteins. The polypeptide is Phosphatidylglycerol--prolipoprotein diacylglyceryl transferase (Bacillus thuringiensis subsp. konkukian (strain 97-27)).